The sequence spans 327 residues: Probable cell division protein WhiA (327 aa).

The segment at residues 275–308 is a DNA-binding region (H-T-H motif); it reads SLEELGRLADPPMTKDAVAGRIRRLLSMADRKAK. The tract at residues 304–327 is disordered; sequence DRKAKQDGIPDTESAVTPDLLEDA.

This sequence belongs to the WhiA family.

Involved in cell division and chromosome segregation. The protein is Probable cell division protein WhiA of Mycolicibacterium gilvum (strain PYR-GCK) (Mycobacterium gilvum (strain PYR-GCK)).